The chain runs to 458 residues: Bifunctional protein GlmU (458 aa).

Residues 1–230 (MLQIDVVILA…DWEVVGVNDK (230 aa)) are pyrophosphorylase. Residues 9 to 12 (LAAG), Lys-23, Gln-75, and 80 to 81 (GT) contribute to the UDP-N-acetyl-alpha-D-glucosamine site. A Mg(2+)-binding site is contributed by Asp-104. UDP-N-acetyl-alpha-D-glucosamine contacts are provided by Gly-139, Glu-155, Asn-170, and Asn-228. Asn-228 is a Mg(2+) binding site. The interval 231–251 (IQLSTLERAHQQDVAKGLMEQ) is linker. Residues 252 to 458 (GVMFADPARF…NWKRPKKNKD (207 aa)) form an N-acetyltransferase region. Residues Arg-334 and Lys-352 each contribute to the UDP-N-acetyl-alpha-D-glucosamine site. His-364 (proton acceptor) is an active-site residue. UDP-N-acetyl-alpha-D-glucosamine is bound by residues Tyr-367 and Asn-378. Acetyl-CoA contacts are provided by residues Ala-381, 387–388 (NY), Ser-406, Ala-424, and Arg-441.

The protein in the N-terminal section; belongs to the N-acetylglucosamine-1-phosphate uridyltransferase family. This sequence in the C-terminal section; belongs to the transferase hexapeptide repeat family. In terms of assembly, homotrimer. Mg(2+) is required as a cofactor.

The protein localises to the cytoplasm. The catalysed reaction is alpha-D-glucosamine 1-phosphate + acetyl-CoA = N-acetyl-alpha-D-glucosamine 1-phosphate + CoA + H(+). It catalyses the reaction N-acetyl-alpha-D-glucosamine 1-phosphate + UTP + H(+) = UDP-N-acetyl-alpha-D-glucosamine + diphosphate. The protein operates within nucleotide-sugar biosynthesis; UDP-N-acetyl-alpha-D-glucosamine biosynthesis; N-acetyl-alpha-D-glucosamine 1-phosphate from alpha-D-glucosamine 6-phosphate (route II): step 2/2. Its pathway is nucleotide-sugar biosynthesis; UDP-N-acetyl-alpha-D-glucosamine biosynthesis; UDP-N-acetyl-alpha-D-glucosamine from N-acetyl-alpha-D-glucosamine 1-phosphate: step 1/1. It functions in the pathway bacterial outer membrane biogenesis; LPS lipid A biosynthesis. In terms of biological role, catalyzes the last two sequential reactions in the de novo biosynthetic pathway for UDP-N-acetylglucosamine (UDP-GlcNAc). The C-terminal domain catalyzes the transfer of acetyl group from acetyl coenzyme A to glucosamine-1-phosphate (GlcN-1-P) to produce N-acetylglucosamine-1-phosphate (GlcNAc-1-P), which is converted into UDP-GlcNAc by the transfer of uridine 5-monophosphate (from uridine 5-triphosphate), a reaction catalyzed by the N-terminal domain. This Nitrosomonas eutropha (strain DSM 101675 / C91 / Nm57) protein is Bifunctional protein GlmU.